Here is a 71-residue protein sequence, read N- to C-terminus: UPF0346 protein SPT_1257 (71 aa).

The protein belongs to the UPF0346 family.

The sequence is that of UPF0346 protein SPT_1257 from Streptococcus pneumoniae (strain Taiwan19F-14).